The chain runs to 105 residues: Endogenous retrovirus group K member 6 Rec protein (105 aa).

The disordered stretch occupies residues 1 to 49 (MNPSEMQRKAPPRRRRHRNRAPLTHKMNKMVTSEEQMKLPSTKKAEPPT). The segment covering 10-20 (APPRRRRHRNR) has biased composition (basic residues). The short motif at 13 to 20 (RRRRHRNR) is the Nuclear localization signal element. Residues 50–59 (WAQLKKLTQL) carry the Nuclear export signal motif.

As to quaternary structure, forms homodimers, homotrimers, and homotetramers via a C-terminal domain. Associates with XPO1 and with ZNF145. In terms of tissue distribution, expressed at higher level in placenta, expressed at lower level in several organs and cell lines.

The protein resides in the cytoplasm. Its subcellular location is the nucleus. It is found in the nucleolus. Its function is as follows. Retroviral replication requires the nuclear export and translation of unspliced, singly-spliced and multiply-spliced derivatives of the initial genomic transcript. Rec interacts with a highly structured RNA element (RcRE) present in the viral 3'LTR and recruits the cellular nuclear export machinery. This permits export to the cytoplasm of unspliced genomic or incompletely spliced subgenomic viral transcripts. This chain is Endogenous retrovirus group K member 6 Rec protein (ERVK-6), found in Homo sapiens (Human).